Consider the following 819-residue polypeptide: Nonribosomal peptide synthetase 9 (819 aa).

The segment at 202–591 (LQAPTQHAVR…GRKDTQAKIR (390 aa)) is adenylation (A) domain. One can recognise a Carrier domain in the interval 722–798 (QPRNERERLI…SLAEFLSSSS (77 aa)). S759 is modified (O-(pantetheine 4'-phosphoryl)serine).

This sequence belongs to the NRP synthetase family.

It participates in secondary metabolite biosynthesis. Its function is as follows. Nonribosomal peptide synthetase; part of the Fg3_54/C64 gene cluster that mediates the biosynthesis of the octapeptide fusaoctaxin A, a virulence factor that is required for cell-to-cell invasiveness of plant host. The 2 nonribosomal peptide synthetases NRPS9 and NRPS5 form an assembly line which likely utilizes GABA as a starter unit (loaded on the unique module M1 of NRPS9) and sequentially incorporates seven extender units composed of the residues L-Ala, L-allo-Ile, L-Ser, L-Val, L-Ser, L-Leu and L-Leu, respectively. During the process, each of the residues that are tethered on modules M3-M7 of NRPS5 containing an E domain can undergo an epimerization reaction to produce a D-configuration before the transpeptidation reaction occurs. The elongation of the peptidyl chain might be terminated by module M8-mediated L-Leu incorporation, followed by R domain-catalyzed 4 electron reduction to release the resulting octapeptide from the assembly line as an alcohol. Fusaoctaxin A is cleaved by the cluster specific ABC transporter FGM5 to the pentapeptide fusapentaxin A and the tripeptide fusatrixin A. The other enzymes from the cluster, FGM1, FGM2, FGM3 and FGM9 seem not to be involved in the biosynthesis of fusaoctaxin A and their functions have still to be determined. This Gibberella zeae (strain ATCC MYA-4620 / CBS 123657 / FGSC 9075 / NRRL 31084 / PH-1) (Wheat head blight fungus) protein is Nonribosomal peptide synthetase 9.